The following is a 378-amino-acid chain: Spermidine/putrescine import ATP-binding protein PotA (378 aa).

An ABC transporter domain is found at 18–248 (VQLAGIRKCF…PKNLFVTGFI (231 aa)). Position 50–57 (50–57 (GPSGCGKT)) interacts with ATP.

The protein belongs to the ABC transporter superfamily. Spermidine/putrescine importer (TC 3.A.1.11.1) family. As to quaternary structure, the complex is composed of two ATP-binding proteins (PotA), two transmembrane proteins (PotB and PotC) and a solute-binding protein (PotD).

The protein resides in the cell inner membrane. It catalyses the reaction ATP + H2O + polyamine-[polyamine-binding protein]Side 1 = ADP + phosphate + polyamineSide 2 + [polyamine-binding protein]Side 1.. Its function is as follows. Part of the ABC transporter complex PotABCD involved in spermidine/putrescine import. Responsible for energy coupling to the transport system. This chain is Spermidine/putrescine import ATP-binding protein PotA, found in Shigella flexneri serotype 5b (strain 8401).